The sequence spans 128 residues: Large ribosomal subunit protein bL12 (128 aa).

Belongs to the bacterial ribosomal protein bL12 family. Homodimer. Part of the ribosomal stalk of the 50S ribosomal subunit. Forms a multimeric L10(L12)X complex, where L10 forms an elongated spine to which 2 to 4 L12 dimers bind in a sequential fashion. Binds GTP-bound translation factors.

Its function is as follows. Forms part of the ribosomal stalk which helps the ribosome interact with GTP-bound translation factors. Is thus essential for accurate translation. The sequence is that of Large ribosomal subunit protein bL12 from Aquifex aeolicus (strain VF5).